Reading from the N-terminus, the 257-residue chain is DNA-binding and peroxide stress resistance protein YaaA (257 aa).

The Helix-hairpin-helix motif lies at 35-66 (IGIARKLSAPQIGKLMSISDKLADLNATRFHD).

The protein belongs to the UPF0246 family.

The protein resides in the cytoplasm. Protects bacteria from neutrophil-related defense upon infection of mammals. Binds DNA. This is DNA-binding and peroxide stress resistance protein YaaA from Klebsiella pneumoniae subsp. pneumoniae (strain HS11286).